We begin with the raw amino-acid sequence, 326 residues long: Zona pellucida-binding protein 2 (326 aa).

An N-terminal signal peptide occupies residues 1 to 20; it reads MLAWALLSAVLWSLAGVGSA. 3 N-linked (GlcNAc...) asparagine glycosylation sites follow: Asn86, Asn220, and Asn256.

This sequence belongs to the zona pellucida-binding protein Sp38 family. Post-translationally, N-glycosylated.

Its subcellular location is the secreted. The protein localises to the cytoplasmic vesicle. It localises to the secretory vesicle. It is found in the acrosome. Its function is as follows. Is implicated in sperm-oocyte interaction during fertilization. The chain is Zona pellucida-binding protein 2 (Zpbp2) from Rattus norvegicus (Rat).